Here is a 629-residue protein sequence, read N- to C-terminus: MSRRPVWIDGSDMRPAPLRTAAWLRACLLVGLSTLAMPGWASAPPCPQMTPEAMQNDYQALDARIARWDRAYYRQGQRLVDDGTYDSAKRRLAHWAECFPLLAKPSVNTHEPTGAKHHPVAQTGIAKLPDRDAVAGWVARQGDHPLWVQPKVDGVAVTLVYRHGRLAAAISRGDGVSGQDWYTKALHIAAIPSHLPADAPPLVILQGELYARRTAHRQSRDGTDGARARIAGLMARDTLTDREGSTIGLFVWAWPNGPDTMPERLETLAGWGFGDVAEMTHGVATAEDIAAWRQRWYRHALPFATDGVVVKRGDRPPGSDWQASPPDWAMAWKYPAREALARVDALEFSVGRTGRIAVVAELEPVLLGDKRVTRVSLGSLAHWRRTDVRPGDQVRLRLAGLTIPQLQEVVVRTRPRPQVDAPEADQYDRLSCLRFTPACRDQFLARLEWLGSDEGLDFPGIGPATWNQLVDAGLVKGLLDWRTLDTAALEALPGVGKKTARAWQRHFALADTRSAVRWLRALGVPAVPRQALTDALERYGMAGLGTLAPPDWRDYSGIGETRAMQLTRFFRDTDIRHWLASLESTRALQKQHGTNTRNEQKGDVRRVDVKQDNGTTWLPEQDSNLRPND.

Lys-151 acts as the N6-AMP-lysine intermediate in catalysis. The span at 588–597 (LQKQHGTNTR) shows a compositional bias: polar residues. Residues 588-629 (LQKQHGTNTRNEQKGDVRRVDVKQDNGTTWLPEQDSNLRPND) are disordered. A compositionally biased stretch (basic and acidic residues) spans 598–611 (NEQKGDVRRVDVKQ). Over residues 612-629 (DNGTTWLPEQDSNLRPND) the composition is skewed to polar residues.

It belongs to the NAD-dependent DNA ligase family. LigB subfamily.

The enzyme catalyses NAD(+) + (deoxyribonucleotide)n-3'-hydroxyl + 5'-phospho-(deoxyribonucleotide)m = (deoxyribonucleotide)n+m + AMP + beta-nicotinamide D-nucleotide.. Functionally, catalyzes the formation of phosphodiester linkages between 5'-phosphoryl and 3'-hydroxyl groups in double-stranded DNA using NAD as a coenzyme and as the energy source for the reaction. In Chromohalobacter salexigens (strain ATCC BAA-138 / DSM 3043 / CIP 106854 / NCIMB 13768 / 1H11), this protein is DNA ligase B.